The chain runs to 79 residues: Defensin-like protein 3 (79 aa).

The first 29 residues, 1 to 29 (MAKFASIITLLFAALVVFAAFEAPTMVEA), serve as a signal peptide directing secretion. 4 disulfide bridges follow: C32–C79, C43–C64, C49–C73, and C53–C75.

Belongs to the DEFL family.

It localises to the secreted. In terms of biological role, possesses antifungal activity sensitive to inorganic cations. This chain is Defensin-like protein 3 (AFP3), found in Brassica napus (Rape).